The sequence spans 319 residues: Glycine--tRNA ligase alpha subunit (319 aa).

This sequence belongs to the class-II aminoacyl-tRNA synthetase family. Tetramer of two alpha and two beta subunits.

It is found in the cytoplasm. The catalysed reaction is tRNA(Gly) + glycine + ATP = glycyl-tRNA(Gly) + AMP + diphosphate. This is Glycine--tRNA ligase alpha subunit from Coxiella burnetii (strain CbuK_Q154) (Coxiella burnetii (strain Q154)).